The sequence spans 69 residues: Light-harvesting protein B-870 beta chain (69 aa).

A propeptide spanning residues methionine 1 to alanine 2 is cleaved from the precursor. Residues glutamate 3–lysine 22 lie on the Cytoplasmic side of the membrane. Histidine 21 and histidine 39 together coordinate a bacteriochlorophyll. The helical transmembrane segment at isoleucine 23–tryptophan 45 threads the bilayer. Over arginine 46–serine 56 the chain is Periplasmic. A propeptide spanning residues alanine 57–serine 69 is cleaved from the precursor.

It belongs to the antenna complex beta subunit family. As to quaternary structure, the core complex is formed by different alpha and beta chains, binding bacteriochlorophyll molecules, and arranged most probably in tetrameric structures disposed around the reaction center. The non-pigmented gamma chains may constitute additional components.

The protein localises to the cell inner membrane. In terms of biological role, antenna complexes are light-harvesting systems, which transfer the excitation energy to the reaction centers. This Rhodospirillum rubrum (strain ATCC 11170 / ATH 1.1.1 / DSM 467 / LMG 4362 / NCIMB 8255 / S1) protein is Light-harvesting protein B-870 beta chain.